Consider the following 299-residue polypeptide: Acetylglutamate kinase (299 aa).

Residues 72–73 (GG), R94, and N196 contribute to the substrate site.

Belongs to the acetylglutamate kinase family. ArgB subfamily.

The protein localises to the cytoplasm. It catalyses the reaction N-acetyl-L-glutamate + ATP = N-acetyl-L-glutamyl 5-phosphate + ADP. Its pathway is amino-acid biosynthesis; L-arginine biosynthesis; N(2)-acetyl-L-ornithine from L-glutamate: step 2/4. Its function is as follows. Catalyzes the ATP-dependent phosphorylation of N-acetyl-L-glutamate. This Burkholderia ambifaria (strain MC40-6) protein is Acetylglutamate kinase.